A 105-amino-acid polypeptide reads, in one-letter code: Small ribosomal subunit protein eS24 (105 aa).

The tract at residues 85–105 (SVIAKNEEPEEEPEEEAEDAE) is disordered. A compositionally biased stretch (acidic residues) spans 92-105 (EPEEEPEEEAEDAE).

The protein belongs to the eukaryotic ribosomal protein eS24 family.

This Methanosphaera stadtmanae (strain ATCC 43021 / DSM 3091 / JCM 11832 / MCB-3) protein is Small ribosomal subunit protein eS24.